Reading from the N-terminus, the 131-residue chain is Small ribosomal subunit protein bS6 (131 aa).

Positions 98–131 (EASPMVKAKDERRERREDFANETSEETEAGDSEE) are disordered. The span at 104 to 116 (KAKDERRERREDF) shows a compositional bias: basic and acidic residues. Residues 120–131 (TSEETEAGDSEE) are compositionally biased toward acidic residues.

The protein belongs to the bacterial ribosomal protein bS6 family.

In terms of biological role, binds together with bS18 to 16S ribosomal RNA. The sequence is that of Small ribosomal subunit protein bS6 from Edwardsiella ictaluri (strain 93-146).